A 177-amino-acid chain; its full sequence is 3-hydroxydecanoyl-[acyl-carrier-protein] dehydratase (177 aa).

The active site involves His71.

The protein belongs to the thioester dehydratase family. FabA subfamily. In terms of assembly, homodimer.

Its subcellular location is the cytoplasm. The enzyme catalyses a (3R)-hydroxyacyl-[ACP] = a (2E)-enoyl-[ACP] + H2O. It catalyses the reaction (3R)-hydroxydecanoyl-[ACP] = (2E)-decenoyl-[ACP] + H2O. It carries out the reaction (2E)-decenoyl-[ACP] = (3Z)-decenoyl-[ACP]. The protein operates within lipid metabolism; fatty acid biosynthesis. Functionally, necessary for the introduction of cis unsaturation into fatty acids. Catalyzes the dehydration of (3R)-3-hydroxydecanoyl-ACP to E-(2)-decenoyl-ACP and then its isomerization to Z-(3)-decenoyl-ACP. Can catalyze the dehydratase reaction for beta-hydroxyacyl-ACPs with saturated chain lengths up to 16:0, being most active on intermediate chain length. The sequence is that of 3-hydroxydecanoyl-[acyl-carrier-protein] dehydratase from Wigglesworthia glossinidia brevipalpis.